A 197-amino-acid chain; its full sequence is Thymidylate kinase (197 aa).

7–14 (GIDGSGKS) is an ATP binding site.

This sequence belongs to the thymidylate kinase family.

The catalysed reaction is dTMP + ATP = dTDP + ADP. Phosphorylation of dTMP to form dTDP in both de novo and salvage pathways of dTTP synthesis. The protein is Thymidylate kinase (tmk) of Thermotoga maritima (strain ATCC 43589 / DSM 3109 / JCM 10099 / NBRC 100826 / MSB8).